The following is a 60-amino-acid chain: Large ribosomal subunit protein bL33 (60 aa).

The protein belongs to the bacterial ribosomal protein bL33 family.

The protein is Large ribosomal subunit protein bL33 of Chlorobium limicola (strain DSM 245 / NBRC 103803 / 6330).